Here is a 488-residue protein sequence, read N- to C-terminus: GTPase Der (488 aa).

2 EngA-type G domains span residues 3–166 and 199–372; these read PVVA…AEAM and IKLA…DSAT. GTP-binding positions include 9–16, 56–60, 118–121, 205–212, 252–256, and 317–320; these read GRPNVGKS, DTGGI, NKVD, GKPNVGKS, DTAGV, and NKWD. A KH-like domain is found at 373–457; sequence RRVSTSMLTR…PIQLRFQEGD (85 aa). Positions 469-488 are disordered; it reads MSQERRRKRALSHIKDRKTK. Basic residues predominate over residues 473–488; that stretch reads RRRKRALSHIKDRKTK.

Belongs to the TRAFAC class TrmE-Era-EngA-EngB-Septin-like GTPase superfamily. EngA (Der) GTPase family. In terms of assembly, associates with the 50S ribosomal subunit.

GTPase that plays an essential role in the late steps of ribosome biogenesis. This chain is GTPase Der, found in Shewanella putrefaciens (strain CN-32 / ATCC BAA-453).